Consider the following 669-residue polypeptide: MAPPYHGDTREFSMAPAKKIKAKIKKTLPVTGPQAPTVSELMHWYCMNTNTHGCRRIVVSRGRLRKFIWILLTLSAVGLILWQCAELIMSYYTASVSVTVQFQKLPFPAVTICNINPYKYSAMKEHLSELDKETKNALETLYGFSEGKSKVRRDAADWNSTGRNMQSKLLEKIPLLKFDDLFKKTATEILSGHKRKIEGSAFHQGSSMVNIGEPQDVVGFQLCDPNNSSDCAVYIFSSGVNAIQEWYKLHYMNIMAQIPLEMKVNMGYSAEDLLLTCFFDGISCDSRNFTPFHHPLYGNCYTFNSGENGTILTTSTGGSEYGLQVVLYVEEADYNPFLVTSTGAKIIVHDQDEYPFIEDIGTEIETAMATSIGMHFTRSHKLSQPYSDCTETGNDIPVANLYNKSYSLQICLHSCFQRAMVDTCGCAQYAQPLPPGAEYCNYKKYPNWMYCYYKLHEKFVKEQLGCQQICKESCSFKEWTLTTSLAQWPSSVSEDWMLRVLSWDKRQKINKMLNKTDLANLVVFYKDLNERFISENPANNLVILLSNFGGQLGLWMSCSMVCVIEIIEVFFIDSFSIVMRRRWQKMKKWWNDRKAPRPQEPPQVNAPAKEGHDNPVCTDEDLPTFNTALRLPLPQENHMPRTPPPNYSTLQLNAAFTDQLPDTLEGRSH.

Residues 1 to 67 (MAPPYHGDTR…VVSRGRLRKF (67 aa)) lie on the Cytoplasmic side of the membrane. The chain crosses the membrane as a helical span at residues 68–88 (IWILLTLSAVGLILWQCAELI). Over 89-551 (MSYYTASVSV…VILLSNFGGQ (463 aa)) the chain is Extracellular. 8 cysteine pairs are disulfide-bonded: cysteine 113/cysteine 300, cysteine 223/cysteine 231, cysteine 277/cysteine 284, cysteine 389/cysteine 474, cysteine 411/cysteine 470, cysteine 415/cysteine 466, cysteine 424/cysteine 451, and cysteine 426/cysteine 440. The helical transmembrane segment at 552–572 (LGLWMSCSMVCVIEIIEVFFI) threads the bilayer. Topologically, residues 573–669 (DSFSIVMRRR…LPDTLEGRSH (97 aa)) are cytoplasmic. Positions 592 to 619 (DRKAPRPQEPPQVNAPAKEGHDNPVCTD) are disordered.

The protein belongs to the amiloride-sensitive sodium channel (TC 1.A.6) family. SCNN1G subfamily. Component of the heterotrimeric epithelial sodium channel (ENaC) composed of an alpha/SCNN1A, a beta/SCNN1B and a gamma/SCNN1G subunit.

It is found in the apical cell membrane. It catalyses the reaction Na(+)(in) = Na(+)(out). Its activity is regulated as follows. Originally identified and characterized by its inhibition by the diuretic drug amiloride. Its function is as follows. This is one of the three pore-forming subunits of the heterotrimeric epithelial sodium channel (ENaC), a critical regulator of sodium balance and fluid homeostasis. ENaC operates in epithelial tissues, where it mediates the electrodiffusion of sodium ions from extracellular fluid through the apical membrane of cells, with water following osmotically. This Pelodiscus sinensis (Chinese softshell turtle) protein is Epithelial sodium channel subunit gamma.